A 358-amino-acid chain; its full sequence is 2-oxoisovalerate dehydrogenase subunit beta 2, mitochondrial (358 aa).

A mitochondrion-targeting transit peptide spans 1–16 (MAAALVRRFCRGSSFP). Tyrosine 119 contacts thiamine diphosphate. Positions 145, 147, 148, 198, and 200 each coordinate K(+).

In terms of assembly, heterotetramer of alpha and beta chains. It depends on thiamine diphosphate as a cofactor. In terms of tissue distribution, expressed in the non-photosynthetic organs such as siliques, flowers and roots.

Its subcellular location is the mitochondrion matrix. It catalyses the reaction N(6)-[(R)-lipoyl]-L-lysyl-[protein] + 3-methyl-2-oxobutanoate + H(+) = N(6)-[(R)-S(8)-2-methylpropanoyldihydrolipoyl]-L-lysyl-[protein] + CO2. Functionally, the branched-chain alpha-keto dehydrogenase complex catalyzes the overall conversion of alpha-keto acids to acyl-CoA and CO(2). It contains multiple copies of three enzymatic components: branched-chain alpha-keto acid decarboxylase (E1), lipoamide acyltransferase (E2) and lipoamide dehydrogenase (E3). Required during sugar starvation and acts under the control of a sugar-sensing mechanism involving Ser/Thr kinases and phosphatases. This Arabidopsis thaliana (Mouse-ear cress) protein is 2-oxoisovalerate dehydrogenase subunit beta 2, mitochondrial (DIN4).